The chain runs to 183 residues: Capsid protein (183 aa).

The tract at residues 143–183 is disordered; it reads LPENAVVRRRGRSPRRRTPSPRRRRSQSPRRRRSQSRGSQC. Basic residues predominate over residues 149–177; it reads VRRRGRSPRRRTPSPRRRRSQSPRRRRSQ. Phosphoserine; by host occurs at positions 155, 162, and 170. A 1; half-length repeat occupies 155–161; the sequence is SPRRRTP. The tract at residues 155 to 177 is 3 X 8 AA repeats of S-P-R-R-R-[PR]-S-Q; it reads SPRRRTPSPRRRRSQSPRRRRSQ. Residues 158-175 carry the Bipartite nuclear localization signal motif; sequence RRTPSPRRRRSQSPRRRR. Tandem repeats lie at residues 162 to 169 and 170 to 177. An RNA binding region spans residues 177–183; it reads QSRGSQC.

This sequence belongs to the orthohepadnavirus core antigen family. As to quaternary structure, homodimerizes, then multimerizes. Interacts with cytosol exposed regions of viral L glycoprotein present in the reticulum-to-Golgi compartment. Interacts with human FLNB. Phosphorylated form interacts with host importin alpha; this interaction depends on the exposure of the NLS, which itself depends upon genome maturation and/or phosphorylation of the capsid protein. Interacts with host NUP153. Phosphorylated by host SRPK1, SRPK2, and maybe protein kinase C or GAPDH. Phosphorylation is critical for pregenomic RNA packaging. Protein kinase C phosphorylation is stimulated by HBx protein and may play a role in transport of the viral genome to the nucleus at the late step during the viral replication cycle.

Its subcellular location is the virion. The protein resides in the host cytoplasm. In terms of biological role, self assembles to form an icosahedral capsid. Most capsids appear to be large particles with an icosahedral symmetry of T=4 and consist of 240 copies of capsid protein, though a fraction forms smaller T=3 particles consisting of 180 capsid proteins. Entering capsids are transported along microtubules to the nucleus. Phosphorylation of the capsid is thought to induce exposure of nuclear localization signal in the C-terminal portion of the capsid protein that allows binding to the nuclear pore complex via the importin (karyopherin-) alpha and beta. Capsids are imported in intact form through the nuclear pore into the nuclear basket, where it probably binds NUP153. Only capsids that contain the mature viral genome can release the viral DNA and capsid protein into the nucleoplasm. Immature capsids get stuck in the basket. Capsids encapsulate the pre-genomic RNA and the P protein. Pre-genomic RNA is reverse-transcribed into DNA while the capsid is still in the cytoplasm. The capsid can then either be directed to the nucleus, providing more genomes for transcription, or bud through the endoplasmic reticulum to provide new virions. In Homo sapiens (Human), this protein is Capsid protein.